The chain runs to 372 residues: N-methyl-L-tryptophan oxidase (372 aa).

Asp-4 to His-34 is a binding site for FAD. Cys-308 carries the S-8alpha-FAD cysteine modification.

This sequence belongs to the MSOX/MTOX family. MTOX subfamily. As to quaternary structure, monomer. The cofactor is FAD.

The catalysed reaction is N(alpha)-methyl-L-tryptophan + O2 + H2O = L-tryptophan + formaldehyde + H2O2. Catalyzes the oxidative demethylation of N-methyl-L-tryptophan. In Escherichia coli O6:H1 (strain CFT073 / ATCC 700928 / UPEC), this protein is N-methyl-L-tryptophan oxidase.